Consider the following 235-residue polypeptide: Glutathione S-transferase L3 (235 aa).

One can recognise a GST N-terminal domain in the interval 27–108 (GTTRLYTSYV…YLDNTFEGPS (82 aa)). Glutathione-binding positions include 37–38 (CP), 65–66 (NR), 79–80 (KV), and 92–93 (ES). The region spanning 86-230 (NGKIIGESLD…MDPKEIVEVF (145 aa)) is the GST C-terminal domain.

Belongs to the GST superfamily. Lambda family.

It localises to the cytoplasm. The protein resides in the cytosol. The catalysed reaction is RX + glutathione = an S-substituted glutathione + a halide anion + H(+). Its function is as follows. Catalyzes the glutathione-dependent reduction of S-glutathionylquercetin to quercetin. The polypeptide is Glutathione S-transferase L3 (GSTL3) (Arabidopsis thaliana (Mouse-ear cress)).